A 693-amino-acid chain; its full sequence is Exocyst complex component 7 (693 aa).

A Phosphoserine modification is found at Ser-236. Residues 236–259 (SWGHEALRPRHSGRQTEPKKTTSA) form a disordered region.

The protein belongs to the EXO70 family. In terms of assembly, the exocyst complex is composed of Sec3/Exoc1, Sec5/Exoc2, Sec6/Exoc3, Sec8/Exoc4, Sec10/Exoc5, Sec15/Exoc6, Exo70/Exoc7 and Exo84/Exoc8.

Required for exocytosis. Thought to function in intracellular vesicle targeting and docking before SNARE complex formation. This chain is Exocyst complex component 7, found in Drosophila melanogaster (Fruit fly).